The following is a 475-amino-acid chain: NADH-quinone oxidoreductase subunit N 1 (475 aa).

The next 14 membrane-spanning stretches (helical) occupy residues 8–28 (VMPL…EAAT), 36–56 (LFAI…PSEP), 67–87 (GGFF…ITLI), 100–120 (GEYY…SAAA), 122–142 (LTIL…LAGI), 157–177 (FLLG…IYGA), 199–219 (FLSG…AVPF), 244–264 (AAAL…LETF), 268–288 (PTAI…AALI), 295–315 (MFAY…ATGT), 322–342 (VLYY…IIIL), 366–386 (AFLM…GGFI), 403–423 (LAVA…RVVI), and 443–463 (ATIA…SLLI).

The protein belongs to the complex I subunit 2 family. NDH-1 is composed of 14 different subunits. Subunits NuoA, H, J, K, L, M, N constitute the membrane sector of the complex.

It is found in the cell inner membrane. The enzyme catalyses a quinone + NADH + 5 H(+)(in) = a quinol + NAD(+) + 4 H(+)(out). Functionally, NDH-1 shuttles electrons from NADH, via FMN and iron-sulfur (Fe-S) centers, to quinones in the respiratory chain. The immediate electron acceptor for the enzyme in this species is believed to be a menaquinone. Couples the redox reaction to proton translocation (for every two electrons transferred, four hydrogen ions are translocated across the cytoplasmic membrane), and thus conserves the redox energy in a proton gradient. In Chloroherpeton thalassium (strain ATCC 35110 / GB-78), this protein is NADH-quinone oxidoreductase subunit N 1.